A 63-amino-acid polypeptide reads, in one-letter code: Large ribosomal subunit protein bL28 (63 aa).

It belongs to the bacterial ribosomal protein bL28 family.

This Geobacter sulfurreducens (strain ATCC 51573 / DSM 12127 / PCA) protein is Large ribosomal subunit protein bL28.